A 195-amino-acid chain; its full sequence is NAD(P)H-quinone oxidoreductase subunit J, chloroplastic (195 aa).

This sequence belongs to the complex I 30 kDa subunit family. In terms of assembly, NDH is composed of at least 16 different subunits, 5 of which are encoded in the nucleus.

It is found in the plastid. It localises to the chloroplast thylakoid membrane. The enzyme catalyses a plastoquinone + NADH + (n+1) H(+)(in) = a plastoquinol + NAD(+) + n H(+)(out). The catalysed reaction is a plastoquinone + NADPH + (n+1) H(+)(in) = a plastoquinol + NADP(+) + n H(+)(out). NDH shuttles electrons from NAD(P)H:plastoquinone, via FMN and iron-sulfur (Fe-S) centers, to quinones in the photosynthetic chain and possibly in a chloroplast respiratory chain. The immediate electron acceptor for the enzyme in this species is believed to be plastoquinone. Couples the redox reaction to proton translocation, and thus conserves the redox energy in a proton gradient. This is NAD(P)H-quinone oxidoreductase subunit J, chloroplastic from Chlorokybus atmophyticus (Soil alga).